Reading from the N-terminus, the 166-residue chain is Gem-associated protein 6 (166 aa).

One can recognise a Sm domain in the interval 4 to 73 (WMKKSPLEWE…VQTVETISEG (70 aa)). Residues 68–166 (ETISEGDHRV…LIQGHLSASQ (99 aa)) enclose the AD domain. A phosphoserine mark is found at S94 and S165.

Part of the core SMN complex that contains SMN1, GEMIN2/SIP1, DDX20/GEMIN3, GEMIN4, GEMIN5, GEMIN6, GEMIN7, GEMIN8 and STRAP/UNRIP. Part of the SMN-Sm complex that contains SMN1, GEMIN2/SIP1, DDX20/GEMIN3, GEMIN4, GEMIN5, GEMIN6, GEMIN7, GEMIN8, STRAP/UNRIP and the Sm proteins SNRPB, SNRPD1, SNRPD2, SNRPD3, SNRPE, SNRPF and SNRPG. Interacts with GEMIN7; the interaction is direct. Interacts with GEMIN8; the interaction is direct. Interacts with SNRPB, SNRPD2, SNRPD3 and SNRPE; the interaction is direct.

The protein resides in the nucleus. It localises to the nucleoplasm. Its subcellular location is the gem. It is found in the cytoplasm. Functionally, the SMN complex catalyzes the assembly of small nuclear ribonucleoproteins (snRNPs), the building blocks of the spliceosome, and thereby plays an important role in the splicing of cellular pre-mRNAs. Most spliceosomal snRNPs contain a common set of Sm proteins SNRPB, SNRPD1, SNRPD2, SNRPD3, SNRPE, SNRPF and SNRPG that assemble in a heptameric protein ring on the Sm site of the small nuclear RNA to form the core snRNP (Sm core). In the cytosol, the Sm proteins SNRPD1, SNRPD2, SNRPE, SNRPF and SNRPG are trapped in an inactive 6S pICln-Sm complex by the chaperone CLNS1A that controls the assembly of the core snRNP. To assemble core snRNPs, the SMN complex accepts the trapped 5Sm proteins from CLNS1A forming an intermediate. Binding of snRNA inside 5Sm triggers eviction of the SMN complex, thereby allowing binding of SNRPD3 and SNRPB to complete assembly of the core snRNP. The polypeptide is Gem-associated protein 6 (Gemin6) (Mus musculus (Mouse)).